The chain runs to 181 residues: Inner membrane-spanning protein YciB (181 aa).

The next 5 membrane-spanning stretches (helical) occupy residues 10–30 (LIIFFAVYKFFDIYIASGALI), 50–70 (MHLITFAMVTVFGTLTLVFHD), 72–92 (AFIKWKVTIIYALFALALGVS), 118–138 (VTWYWVSFFAICGLVNIYVAF), and 148–168 (FKVFGLTALTLINTVITVFYL).

This sequence belongs to the YciB family.

It localises to the cell inner membrane. Plays a role in cell envelope biogenesis, maintenance of cell envelope integrity and membrane homeostasis. In Shewanella sp. (strain MR-4), this protein is Inner membrane-spanning protein YciB.